A 363-amino-acid chain; its full sequence is Sensor protein BasS (363 aa).

Topologically, residues 1 to 13 are cytoplasmic; that stretch reads MHFLRRPISLRQR. The chain crosses the membrane as a helical span at residues 14 to 34; the sequence is LILTIGAILLVFELISVFWLW. Over 35–64 the chain is Periplasmic; the sequence is HESTEQIQLFEQALRDNRNNDRHIMREIRE. A helical transmembrane segment spans residues 65–88; sequence AVASLIVPGVFMVSLTLFICYQAV. The HAMP domain occupies 89–141; it reads RRITRPLAELQKELEARTADNLTPIAIHSATLEIEAVVSALNDLVSRLTSTLD. The Cytoplasmic segment spans residues 89–363; sequence RRITRPLAEL…KKDQYVANQI (275 aa). The Histidine kinase domain occupies 149-357; that stretch reads DVAHELRTPL…RAWVRLKKDQ (209 aa). The residue at position 152 (His-152) is a Phosphohistidine; by autocatalysis.

Post-translationally, autophosphorylated.

It localises to the cell inner membrane. It carries out the reaction ATP + protein L-histidine = ADP + protein N-phospho-L-histidine.. Functionally, member of the two-component regulatory system BasS/BasR Autophosphorylates and activates BasR by phosphorylation. This Escherichia coli (strain K12) protein is Sensor protein BasS (basS).